Reading from the N-terminus, the 302-residue chain is Sulfate adenylyltransferase subunit 2 (302 aa).

Belongs to the PAPS reductase family. CysD subfamily. Heterodimer composed of CysD, the smaller subunit, and CysN.

It carries out the reaction sulfate + ATP + H(+) = adenosine 5'-phosphosulfate + diphosphate. Its pathway is sulfur metabolism; hydrogen sulfide biosynthesis; sulfite from sulfate: step 1/3. Its function is as follows. With CysN forms the ATP sulfurylase (ATPS) that catalyzes the adenylation of sulfate producing adenosine 5'-phosphosulfate (APS) and diphosphate, the first enzymatic step in sulfur assimilation pathway. APS synthesis involves the formation of a high-energy phosphoric-sulfuric acid anhydride bond driven by GTP hydrolysis by CysN coupled to ATP hydrolysis by CysD. The polypeptide is Sulfate adenylyltransferase subunit 2 (Buchnera aphidicola subsp. Acyrthosiphon pisum (strain 5A)).